We begin with the raw amino-acid sequence, 297 residues long: UDP-3-O-acyl-N-acetylglucosamine deacetylase (297 aa).

Residues His-77, His-236, and Asp-240 each contribute to the Zn(2+) site. His-263 serves as the catalytic Proton donor.

The protein belongs to the LpxC family. Zn(2+) serves as cofactor.

It catalyses the reaction a UDP-3-O-[(3R)-3-hydroxyacyl]-N-acetyl-alpha-D-glucosamine + H2O = a UDP-3-O-[(3R)-3-hydroxyacyl]-alpha-D-glucosamine + acetate. It functions in the pathway glycolipid biosynthesis; lipid IV(A) biosynthesis; lipid IV(A) from (3R)-3-hydroxytetradecanoyl-[acyl-carrier-protein] and UDP-N-acetyl-alpha-D-glucosamine: step 2/6. Its function is as follows. Catalyzes the hydrolysis of UDP-3-O-myristoyl-N-acetylglucosamine to form UDP-3-O-myristoylglucosamine and acetate, the committed step in lipid A biosynthesis. This Psychrobacter sp. (strain PRwf-1) protein is UDP-3-O-acyl-N-acetylglucosamine deacetylase.